Consider the following 620-residue polypeptide: Proline--tRNA ligase (620 aa).

Belongs to the class-II aminoacyl-tRNA synthetase family. ProS type 1 subfamily. As to quaternary structure, homodimer.

Its subcellular location is the cytoplasm. The enzyme catalyses tRNA(Pro) + L-proline + ATP = L-prolyl-tRNA(Pro) + AMP + diphosphate. In terms of biological role, catalyzes the attachment of proline to tRNA(Pro) in a two-step reaction: proline is first activated by ATP to form Pro-AMP and then transferred to the acceptor end of tRNA(Pro). As ProRS can inadvertently accommodate and process non-cognate amino acids such as alanine and cysteine, to avoid such errors it has two additional distinct editing activities against alanine. One activity is designated as 'pretransfer' editing and involves the tRNA(Pro)-independent hydrolysis of activated Ala-AMP. The other activity is designated 'posttransfer' editing and involves deacylation of mischarged Ala-tRNA(Pro). The misacylated Cys-tRNA(Pro) is not edited by ProRS. The sequence is that of Proline--tRNA ligase from Streptococcus thermophilus (strain ATCC BAA-491 / LMD-9).